The chain runs to 205 residues: Cytochrome c biogenesis ATP-binding export protein CcmA 1 (205 aa).

The ABC transporter domain maps to Leu2 to Leu205. Residue Gly34–Thr41 participates in ATP binding.

This sequence belongs to the ABC transporter superfamily. CcmA exporter (TC 3.A.1.107) family. In terms of assembly, the complex is composed of two ATP-binding proteins (CcmA) and two transmembrane proteins (CcmB).

It localises to the cell inner membrane. It carries out the reaction heme b(in) + ATP + H2O = heme b(out) + ADP + phosphate + H(+). In terms of biological role, part of the ABC transporter complex CcmAB involved in the biogenesis of c-type cytochromes; once thought to export heme, this seems not to be the case, but its exact role is uncertain. Responsible for energy coupling to the transport system. The polypeptide is Cytochrome c biogenesis ATP-binding export protein CcmA 1 (Salmonella typhimurium (strain LT2 / SGSC1412 / ATCC 700720)).